Here is a 122-residue protein sequence, read N- to C-terminus: Large ribosomal subunit protein bL12 (122 aa).

Belongs to the bacterial ribosomal protein bL12 family. Homodimer. Part of the ribosomal stalk of the 50S ribosomal subunit. Forms a multimeric L10(L12)X complex, where L10 forms an elongated spine to which 2 to 4 L12 dimers bind in a sequential fashion. Binds GTP-bound translation factors.

Forms part of the ribosomal stalk which helps the ribosome interact with GTP-bound translation factors. Is thus essential for accurate translation. The polypeptide is Large ribosomal subunit protein bL12 (Staphylococcus aureus (strain Newman)).